Consider the following 665-residue polypeptide: Protein-arginine deiminase type-2 (665 aa).

17 residues coordinate Ca(2+): D123, D125, D127, E131, N154, D156, D158, D166, D169, K171, D177, D180, E354, D389, F408, L411, and E412. C647 serves as the catalytic Nucleophile.

It belongs to the protein arginine deiminase family. As to quaternary structure, homodimer. It depends on Ca(2+) as a cofactor. As to expression, spinal cord, submaxillary gland, cerebrum, cerebellum, and skeletal muscle.

Its subcellular location is the cytoplasm. The catalysed reaction is L-arginyl-[protein] + H2O = L-citrullyl-[protein] + NH4(+). Catalyzes the deimination of arginine residues of proteins. This is Protein-arginine deiminase type-2 (Padi2) from Rattus norvegicus (Rat).